Reading from the N-terminus, the 449-residue chain is Tubulin alpha chain (449 aa).

Gln-11 contributes to the GTP binding site. N6-acetyllysine is present on Lys-40. Glu-71, Ser-140, Gly-144, Thr-145, Thr-179, Asn-206, and Asn-228 together coordinate GTP. A Mg(2+)-binding site is contributed by Glu-71. The active site involves Glu-254.

It belongs to the tubulin family. As to quaternary structure, dimer of alpha and beta chains. A typical microtubule is a hollow water-filled tube with an outer diameter of 25 nm and an inner diameter of 15 nM. Alpha-beta heterodimers associate head-to-tail to form protofilaments running lengthwise along the microtubule wall with the beta-tubulin subunit facing the microtubule plus end conferring a structural polarity. Microtubules usually have 13 protofilaments but different protofilament numbers can be found in some organisms and specialized cells. Requires Mg(2+) as cofactor. Undergoes a tyrosination/detyrosination cycle, the cyclic removal and re-addition of a C-terminal tyrosine residue by the enzymes tubulin tyrosine carboxypeptidase (TTCP) and tubulin tyrosine ligase (TTL), respectively. In terms of processing, some glutamate residues at the C-terminus are either polyglutamylated or polyglycylated. These 2 modifications occur exclusively on glutamate residues and result in either polyglutamate or polyglycine chains on the gamma-carboxyl group. Both modifications can coexist on the same protein on adjacent residues, and lowering polyglycylation levels increases polyglutamylation, and reciprocally. The precise function of such modifications is still unclear but they regulate the assembly and dynamics of axonemal microtubules. Post-translationally, acetylation of alpha chains at Lys-40 stabilizes microtubules and affects affinity and processivity of microtubule motors. This modification has a role in multiple cellular functions, ranging from cell motility, cell cycle progression or cell differentiation to intracellular trafficking and signaling.

It localises to the cytoplasm. It is found in the cytoskeleton. It carries out the reaction GTP + H2O = GDP + phosphate + H(+). Its function is as follows. Tubulin is the major constituent of microtubules, a cylinder consisting of laterally associated linear protofilaments composed of alpha- and beta-tubulin heterodimers. Microtubules grow by the addition of GTP-tubulin dimers to the microtubule end, where a stabilizing cap forms. Below the cap, tubulin dimers are in GDP-bound state, owing to GTPase activity of alpha-tubulin. In Tetrahymena thermophila, this protein is Tubulin alpha chain.